A 186-amino-acid polypeptide reads, in one-letter code: Peptidyl-tRNA hydrolase (186 aa).

Tyrosine 14 is a tRNA binding site. Histidine 19 (proton acceptor) is an active-site residue. Residues tyrosine 64, asparagine 66, and asparagine 112 each contribute to the tRNA site.

Belongs to the PTH family. As to quaternary structure, monomer.

The protein localises to the cytoplasm. The enzyme catalyses an N-acyl-L-alpha-aminoacyl-tRNA + H2O = an N-acyl-L-amino acid + a tRNA + H(+). In terms of biological role, hydrolyzes ribosome-free peptidyl-tRNAs (with 1 or more amino acids incorporated), which drop off the ribosome during protein synthesis, or as a result of ribosome stalling. Its function is as follows. Catalyzes the release of premature peptidyl moieties from peptidyl-tRNA molecules trapped in stalled 50S ribosomal subunits, and thus maintains levels of free tRNAs and 50S ribosomes. The sequence is that of Peptidyl-tRNA hydrolase from Bacillus cereus (strain ATCC 14579 / DSM 31 / CCUG 7414 / JCM 2152 / NBRC 15305 / NCIMB 9373 / NCTC 2599 / NRRL B-3711).